The chain runs to 1736 residues: MERCSRCHHLLLLVLLLLWLSAAPAWAGTAPVDVLRALRFPALPDGVRRARGICPADVAYRVSRPAQLSAPTRQLFPGGFPKDFSLLTAVRARPGLQAPLLTLYSAQGVRQLGLELGRPVRFLYEDQTGRPQPPAQPVFRGLSLADGKWHRVAVAVKGQSVTLIIDCKKRVTRPLPRSARPVLDTRGVIIFGARILDEEVFEGDIQELSIIPGVQAAYESCDQKELECEGGWRERPQRQPSHRTQRSPKQQPPRLHRPQNQEPQAQSTESLYYDYEPPYYDVMTTGTTPDYQDPTPGEEEGILESSPLPPPEEEQTDLQVPPTADRFLTEEYGEGGTEPPAGPYDYTYAYGDDYHEETELGPALSAETARSEAAARGPRGLKGEKGEPAVLEPGMLVEGPPGPEGPAGFPGPPGIQGNPGPVGDPGERGPPGRAGLPGSDGAPGPPGTSLMLPFRFGSGGGDKGPVVAAQEAQAQAILQQARVALRGPPGPMGYTGRPGPLGQPGSPGMKGESGDLGPQGPRGPQGLMGPPGKAGRRGRAGADGARGMPGEPGVKGDRGFDGLPGLPGEKGHRGDTGAQGLPGPPGEDGERGDDGEIGPRGLPGESGPRGLLGPKGPPGIPGPPGVRGMDGPHGPKGSLGPQGEPGPPGQQGTPGTQGLPGPQGAIGPHGEKGPRGKPGLPGMPGSDGPPGHPGKEGPPGTKGNQGPSGPQGPLGYPGPRGIKGVDGIRGLKGHKGEKGEDGFPGFKGDMGVKGDRGEVGVPGSRGEDGPEGPKGRTGPTGDPGPPGLMGEKGKLGVPGLPGYPGRQGPKGSLGFPGFPGASGEKGARGLSGKSGPRGERGPTGPRGQRGPRGATGKSGAKGTSGGDGPHGPPGERGLPGPQGPNGFPGPKGPPGPPGKDGLPGHPGQRGEVGFQGKTGPPGPPGVVGPQGAAGETGPMGERGHPGPPGPPGEQGLTGTAGKEGTKGDPGPPGAPGKDGPAGLRGFPGERGLPGTAGGPGLKGNEGPAGPPGPAGSPGERGSAGSGGPIGPPGRPGPQGPPGAAGEKGVPGEKGPIGPTGRDGVQGPVGLPGPAGPPGVAGEDGDKGEVGDPGQKGAKGNKGEHGPPGPPGPIGPVGQPGAAGADGEPGARGPQGHFGAKGDEGTRGFNGPPGPIGLQGLPGPSGEKGETGDVGPMGPPGPPGPRGPAGPNGADGPQGPPGGVGNLGPPGEKGEPGESGSPGVQGEPGVKGPRGERGEKGETGQAGEAGPPGPKGPTGDDGPKGNPGPVGFPGDPGPPGEVGPRGQDGAKGDRGEDGEPGQPGSPGPTGENGPPGPLGKRGPAGTPGPEGRQGEKGAKGDPGAVGAPGKTGPVGPAGPAGKPGPDGLRGLPGSVGQQGRPGATGQAGPPGPVGPPGLPGLRGDTGAKGEKGHPGLIGLIGPPGEQGEKGDRGLPGPQGSTGQKGETGIPGASGPIGPGGPPGLPGPAGPKGAKGATGPAGPKGEKGVQGPPGHPGPPGEVIQPLPIQMPKKTRRSVDGSRLMQEDEAVPTGGAPGSPGGLEEIFGSLDSLREEIEQMRRPMGTQDSPARTCQDLKLCHPELPDGEYWVDPNQGCARDAFRVFCNFTAGGETCVTPRDDVTQFSYVDSEGAPVGVVQLTFLRLLSVSARQNISYPCSGEAQDSPLKLRGANEDELSPETSPYIKEIRDGCQTQQGRTVLEVRTPVLEQLPVLDASFSELGAPPRRGGVLLGPVCFMG.

The N-terminal stretch at 1-27 is a signal peptide; it reads MERCSRCHHLLLLVLLLLWLSAAPAWA. Residues 57–228 form the Laminin G-like domain; sequence DVAYRVSRPA…ESCDQKELEC (172 aa). A nonhelical region region spans residues 215 to 486; sequence QAAYESCDQK…ILQQARVALR (272 aa). 2 disordered regions span residues 229–465 and 485–1539; these read EGGW…DKGP and LRGP…SPGG. Residues 258 to 270 are compositionally biased toward polar residues; sequence PQNQEPQAQSTES. Residues 363-376 show a composition bias toward low complexity; that stretch reads ALSAETARSEAAAR. Collagen-like domains are found at residues 399-447, 487-545, and 546-587; these read GPPG…GPPG, GPPG…ADGA, and RGMP…PPGE. Residues 400 to 413 show a composition bias toward pro residues; that stretch reads PPGPEGPAGFPGPP. Residues 487 to 1500 are triple-helical region; it reads GPPGPMGYTG…PGHPGPPGEV (1014 aa). Residues 515 to 533 show a composition bias toward low complexity; the sequence is DLGPQGPRGPQGLMGPPGK. The segment covering 615-624 has biased composition (pro residues); it reads KGPPGIPGPP. Residues 650-663 are compositionally biased toward low complexity; it reads QQGTPGTQGLPGPQ. Residues 765–774 are compositionally biased toward basic and acidic residues; it reads RGEDGPEGPK. Over residues 842–861 the composition is skewed to low complexity; sequence PTGPRGQRGPRGATGKSGAK. Positions 994 to 1003 are enriched in gly residues; it reads GTAGGPGLKG. Positions 1029-1040 are enriched in pro residues; the sequence is IGPPGRPGPQGP. Collagen-like domains are found at residues 1072–1127 and 1128–1172; these read GPAG…ADGE and PGAR…ETGD. Over residues 1115–1133 the composition is skewed to low complexity; sequence PVGQPGAAGADGEPGARGP. Positions 1176–1187 are enriched in pro residues; it reads MGPPGPPGPRGP. Positions 1217-1230 are enriched in low complexity; it reads ESGSPGVQGEPGVK. Basic and acidic residues-rich tracts occupy residues 1232 to 1241 and 1287 to 1296; these read PRGERGEKGE and DGAKGDRGED. Low complexity-rich tracts occupy residues 1341–1364 and 1376–1386; these read PGAVGAPGKTGPVGPAGPAGKPGP and QQGRPGATGQA. The span at 1388–1397 shows a compositional bias: pro residues; that stretch reads PPGPVGPPGL. Residues 1413–1422 are compositionally biased toward low complexity; the sequence is PGLIGLIGPP. The Collagen-like 6 domain maps to 1444–1499; that stretch reads GETGIPGASGPIGPGGPPGLPGPAGPKGAKGATGPAGPKGEKGVQGPPGHPGPPGE. The span at 1457–1467 shows a compositional bias: pro residues; sequence PGGPPGLPGPA. The segment covering 1469-1481 has biased composition (low complexity); the sequence is PKGAKGATGPAGP. The propeptide at 1501–1736 is C-terminal propeptide; that stretch reads IQPLPIQMPK…VLLGPVCFMG (236 aa). The region spanning 1541 to 1735 is the Fibrillar collagen NC1 domain; it reads EEIFGSLDSL…GVLLGPVCFM (195 aa). Cysteine 1571 and cysteine 1603 are disulfide-bonded. Ca(2+) contacts are provided by aspartate 1589, asparagine 1591, glutamine 1592, cysteine 1594, and aspartate 1597. Residues asparagine 1604 and asparagine 1650 are each glycosylated (N-linked (GlcNAc...) asparagine). Cystine bridges form between cysteine 1612–cysteine 1733 and cysteine 1655–cysteine 1689.

This sequence belongs to the fibrillar collagen family. Trimers composed of three different chains: alpha 1(XI), alpha 2(XI), and alpha 3(XI). Alpha 3(XI) is a post-translational modification of alpha 1(II). Alpha 1(V) can also be found instead of alpha 3(XI)=1(II). In terms of processing, prolines at the third position of the tripeptide repeating unit (G-X-Y) are hydroxylated in some or all of the chains.

It is found in the secreted. It localises to the extracellular space. The protein resides in the extracellular matrix. May play an important role in fibrillogenesis by controlling lateral growth of collagen II fibrils. This is Collagen alpha-2(XI) chain (COL11A2) from Bos taurus (Bovine).